The primary structure comprises 1643 residues: DNA-directed RNA polymerase subunit beta' (1643 aa).

Residues cysteine 64, cysteine 66, cysteine 79, and cysteine 82 each contribute to the Zn(2+) site. The Mg(2+) site is built by aspartate 684, aspartate 686, and aspartate 688. Zn(2+) contacts are provided by cysteine 1046, cysteine 1239, cysteine 1246, and cysteine 1249.

This sequence belongs to the RNA polymerase beta' chain family. In terms of assembly, the RNAP catalytic core consists of 2 alpha, 1 beta, 1 beta' and 1 omega subunit. When a sigma factor is associated with the core the holoenzyme is formed, which can initiate transcription. Mg(2+) is required as a cofactor. Requires Zn(2+) as cofactor.

The catalysed reaction is RNA(n) + a ribonucleoside 5'-triphosphate = RNA(n+1) + diphosphate. DNA-dependent RNA polymerase catalyzes the transcription of DNA into RNA using the four ribonucleoside triphosphates as substrates. This is DNA-directed RNA polymerase subunit beta' from Petrotoga mobilis (strain DSM 10674 / SJ95).